A 390-amino-acid chain; its full sequence is Phosphoglycerate kinase (390 aa).

Substrate is bound by residues Asp19–Asn21, Arg34, His57–Arg60, Arg115, and Arg148. Residues Lys198, Gly289, Glu320, and Gly347–Ser350 contribute to the ATP site.

This sequence belongs to the phosphoglycerate kinase family. Monomer.

It localises to the cytoplasm. It catalyses the reaction (2R)-3-phosphoglycerate + ATP = (2R)-3-phospho-glyceroyl phosphate + ADP. Its pathway is carbohydrate degradation; glycolysis; pyruvate from D-glyceraldehyde 3-phosphate: step 2/5. This is Phosphoglycerate kinase from Thermus thermophilus (strain ATCC BAA-163 / DSM 7039 / HB27).